Consider the following 294-residue polypeptide: GDP-6-deoxy-D-talose 4-dehydrogenase (294 aa).

NAD(+) contacts are provided by residues 11–12 (FI), 38–39 (DL), 60–64 (LAALT), Thr-104, Tyr-128, Lys-132, and Phe-154. Residues Thr-104 and Tyr-128 each coordinate substrate. Residue Tyr-128 is the Proton acceptor of the active site. Substrate is bound by residues Asn-155 and Arg-190.

Belongs to the NAD(P)-dependent epimerase/dehydratase family.

The catalysed reaction is GDP-6-deoxy-alpha-D-talose + NAD(+) = GDP-4-dehydro-alpha-D-rhamnose + NADH + H(+). It catalyses the reaction GDP-6-deoxy-alpha-D-talose + NADP(+) = GDP-4-dehydro-alpha-D-rhamnose + NADPH + H(+). The protein operates within bacterial outer membrane biogenesis; LPS O-antigen biosynthesis. In terms of biological role, catalyzes the conversion of GDP-4-dehydro-6-deoxy-D-mannose to GDP-6-deoxy-D-talose. This chain is GDP-6-deoxy-D-talose 4-dehydrogenase (tld), found in Aggregatibacter actinomycetemcomitans (Actinobacillus actinomycetemcomitans).